The sequence spans 333 residues: Phosphate acyltransferase (333 aa).

Belongs to the PlsX family. As to quaternary structure, homodimer. Probably interacts with PlsY.

The protein resides in the cytoplasm. The catalysed reaction is a fatty acyl-[ACP] + phosphate = an acyl phosphate + holo-[ACP]. It functions in the pathway lipid metabolism; phospholipid metabolism. Its function is as follows. Catalyzes the reversible formation of acyl-phosphate (acyl-PO(4)) from acyl-[acyl-carrier-protein] (acyl-ACP). This enzyme utilizes acyl-ACP as fatty acyl donor, but not acyl-CoA. The sequence is that of Phosphate acyltransferase from Clostridium botulinum (strain Alaska E43 / Type E3).